Here is a 274-residue protein sequence, read N- to C-terminus: uncharacterized protein (274 aa).

Positions 1 to 15 (MEESKTKRKEDRIDL) are enriched in basic and acidic residues. The tract at residues 1-40 (MEESKTKRKEDRIDLKNTPPQKKSKRDSTNDETARTSLRS) is disordered. Positions 41 to 87 (IMPRGYKMMENMGYKEGETLGSNESALKEPIKVEINTKRRGIRAEKP) constitute a G-patch domain.

It localises to the cytoplasm. The protein resides in the nucleus. This is an uncharacterized protein from Saccharomyces cerevisiae (strain ATCC 204508 / S288c) (Baker's yeast).